The following is a 129-amino-acid chain: MARDKTRMKRKERKNIAAGVAHVNSSFNNTKILISDVQGNAISWSSAGTMGFKGSRKSTPYAAQMAAEDAAKKAQEHGMKTIEVEVQGPGSGRESALRALAAAGLNITSIRDVTPMAHNGCRPPKRRRV.

This sequence belongs to the universal ribosomal protein uS11 family. In terms of assembly, part of the 30S ribosomal subunit. Interacts with proteins S7 and S18. Binds to IF-3.

Located on the platform of the 30S subunit, it bridges several disparate RNA helices of the 16S rRNA. Forms part of the Shine-Dalgarno cleft in the 70S ribosome. The protein is Small ribosomal subunit protein uS11 of Cereibacter sphaeroides (strain ATCC 17025 / ATH 2.4.3) (Rhodobacter sphaeroides).